A 447-amino-acid polypeptide reads, in one-letter code: DNA primase DnaG (447 aa).

One can recognise a Toprim domain in the interval 200–274; that stretch reads DSIIVVEGRA…DIDYVARAPE (75 aa). Positions 206, 248, and 250 each coordinate Mg(2+).

Belongs to the archaeal DnaG primase family. As to quaternary structure, forms a ternary complex with MCM helicase and DNA. Component of the archaeal exosome complex. Mg(2+) is required as a cofactor.

It catalyses the reaction ssDNA + n NTP = ssDNA/pppN(pN)n-1 hybrid + (n-1) diphosphate.. Functionally, RNA polymerase that catalyzes the synthesis of short RNA molecules used as primers for DNA polymerase during DNA replication. Also part of the exosome, which is a complex involved in RNA degradation. Acts as a poly(A)-binding protein that enhances the interaction between heteromeric, adenine-rich transcripts and the exosome. The sequence is that of DNA primase DnaG from Pyrococcus horikoshii (strain ATCC 700860 / DSM 12428 / JCM 9974 / NBRC 100139 / OT-3).